A 124-amino-acid polypeptide reads, in one-letter code: Small ribosomal subunit protein bS6 (124 aa).

A disordered region spans residues 96–124; sequence ETGPSPMMKEVQREEAKKAAAAQPTEAQA. Low complexity predominate over residues 114-124; the sequence is AAAAQPTEAQA.

This sequence belongs to the bacterial ribosomal protein bS6 family.

Its function is as follows. Binds together with bS18 to 16S ribosomal RNA. In Burkholderia mallei (strain ATCC 23344), this protein is Small ribosomal subunit protein bS6.